Consider the following 58-residue polypeptide: uncharacterized protein (58 aa).

This is an uncharacterized protein from Treponema pallidum (strain Nichols).